The primary structure comprises 141 residues: Hemoglobin subunit alpha-2 (141 aa).

The 141-residue stretch at 1–141 (VLTEDDKNHV…VCKDLVSKYR (141 aa)) folds into the Globin domain. Residue H58 coordinates O2. A heme b-binding site is contributed by H87.

The protein belongs to the globin family. The major hemoglobin component (HbIII) is a heterotetramer of two alpha-2 chains and two beta-1 chains. Red blood cells.

Involved in oxygen transport from the lung to the various peripheral tissues. In Varanus albigularis (White-throated monitor), this protein is Hemoglobin subunit alpha-2.